Here is a 134-residue protein sequence, read N- to C-terminus: UPF0412 protein YaaI (134 aa).

A signal peptide spans 1-23 (MKSVFTISASLAISLMLCCTAQA).

The protein belongs to the UPF0412 family.

The polypeptide is UPF0412 protein YaaI (Escherichia coli O157:H7).